We begin with the raw amino-acid sequence, 284 residues long: Ribose-phosphate pyrophosphokinase (284 aa).

ATP contacts are provided by residues 34–36 (DNE) and 92–93 (RQ). Positions 125 and 163 each coordinate Mg(2+). Residue lysine 186 is part of the active site. D-ribose 5-phosphate contacts are provided by residues arginine 188, aspartate 212, and 216–220 (STGGT).

The protein belongs to the ribose-phosphate pyrophosphokinase family. Class III (archaeal) subfamily. As to quaternary structure, homotetramer. It depends on Mg(2+) as a cofactor.

It localises to the cytoplasm. It carries out the reaction D-ribose 5-phosphate + ATP = 5-phospho-alpha-D-ribose 1-diphosphate + AMP + H(+). The protein operates within metabolic intermediate biosynthesis; 5-phospho-alpha-D-ribose 1-diphosphate biosynthesis; 5-phospho-alpha-D-ribose 1-diphosphate from D-ribose 5-phosphate (route I): step 1/1. With respect to regulation, activated by inorganic phosphate, with a maximal activity at 190 mM. Above this concentration inorganic phosphate progressively inhibits the kinase. Completely inhibited by ADP, and partially inhibited by alpha,beta-methylene ATP (mATP). Lack of allosteric regulation. In terms of biological role, involved in the biosynthesis of the central metabolite phospho-alpha-D-ribosyl-1-pyrophosphate (PRPP) via the transfer of pyrophosphoryl group from ATP to 1-hydroxyl of ribose-5-phosphate (Rib-5-P). It can also use dATP as diphosphoryl donor. In Methanocaldococcus jannaschii (strain ATCC 43067 / DSM 2661 / JAL-1 / JCM 10045 / NBRC 100440) (Methanococcus jannaschii), this protein is Ribose-phosphate pyrophosphokinase.